Consider the following 204-residue polypeptide: CASP-like protein 2U1 (204 aa).

The Cytoplasmic portion of the chain corresponds to 1–36 (MGVLGGDAHVPIGSQVSPGSVVVTNNESFGHRKLLK). Residues 37 to 57 (GVDFLVRIKAFAFCLAVIVLL) traverse the membrane as a helical segment. Residues 58 to 84 (KNNVQTTVIAPGIVLQAKYNNTKAPVS) are Extracellular-facing. N-linked (GlcNAc...) asparagine glycosylation is present at asparagine 77. A helical transmembrane segment spans residues 85-105 (LLVLASICCGYAFLQAVVSLL). Over 106–117 (SFIRDKRVLNNT) the chain is Cytoplasmic. The chain crosses the membrane as a helical span at residues 118-138 (VLAWLTFLLDQVLTYLLLGSA). Over 139 to 170 (AATAEAAYIAKRGEDKVQWKAVCGPFKRFCDH) the chain is Extracellular. A helical transmembrane segment spans residues 171–191 (FAATVFLSFIAVIAFAVSAAI). Over 192 to 204 (SAYYLFRRSKGFK) the chain is Cytoplasmic.

It belongs to the Casparian strip membrane proteins (CASP) family. In terms of assembly, homodimer and heterodimers.

It localises to the cell membrane. This is CASP-like protein 2U1 from Selaginella moellendorffii (Spikemoss).